Consider the following 151-residue polypeptide: Arginine repressor (151 aa).

It belongs to the ArgR family.

The protein resides in the cytoplasm. It participates in amino-acid biosynthesis; L-arginine biosynthesis [regulation]. Regulates arginine biosynthesis genes. This Lachnospira eligens (strain ATCC 27750 / DSM 3376 / VPI C15-48 / C15-B4) (Eubacterium eligens) protein is Arginine repressor.